The chain runs to 278 residues: Chitosanase (278 aa).

An N-terminal signal peptide occupies residues 1-40 (MHSQHRTARIALAVVLTAIPASLATAGVGYASTQASTAVK). E62 acts as the Proton donor in catalysis. Residue D80 is the Nucleophile of the active site.

The protein belongs to the glycosyl hydrolase 46 family.

Its subcellular location is the secreted. It catalyses the reaction Endohydrolysis of beta-(1-&gt;4)-linkages between D-glucosamine residues in a partly acetylated chitosan.. Functionally, aids in the defense against invading fungal pathogens by degrading their cell wall chitosan. The sequence is that of Chitosanase (csn) from Streptomyces sp. (strain N174).